Here is a 238-residue protein sequence, read N- to C-terminus: Ribonuclease Rh (238 aa).

The signal sequence occupies residues M1 to A16. Disulfide bonds link C19/C36, C26/C69, C35/C136, C79/C128, and C198/C229. Residues H62, E121, and H125 contribute to the active site.

The protein belongs to the RNase T2 family.

It carries out the reaction a ribonucleotidyl-ribonucleotide-RNA + H2O = a 3'-end 3'-phospho-ribonucleotide-RNA + a 5'-end dephospho-ribonucleoside-RNA + H(+). This is a base non-specific ribonuclease. This chain is Ribonuclease Rh, found in Rhizopus niveus.